Reading from the N-terminus, the 257-residue chain is Homeobox protein goosecoid (257 aa).

A DNA-binding region (homeobox) is located at residues 160-219 (KRRHRTIFTDEQLEALENLFQETKYPDVGTREQLARKVHLREEKVEVWFKNRRAKWRRQK). Residues 213–257 (AKWRRQKRSSSEESENAEKWNKTSSSKASPEKREEEGKSDLDSDS) are disordered. The span at 241–257 (SPEKREEEGKSDLDSDS) shows a compositional bias: basic and acidic residues.

It belongs to the paired homeobox family. Bicoid subfamily.

The protein resides in the nucleus. Regulates chordin (CHRD). May play a role in spatial programing within discrete embryonic fields or lineage compartments during organogenesis. In concert with NKX3-2, plays a role in defining the structural components of the middle ear; required for the development of the entire tympanic ring. Probably involved in the regulatory networks that define neural crest cell fate specification and determine mesoderm cell lineages in mammals. The chain is Homeobox protein goosecoid (GSC) from Saguinus labiatus (Red-chested mustached tamarin).